Here is a 181-residue protein sequence, read N- to C-terminus: Bifunctional protein PyrR (181 aa).

The PRPP-binding signature appears at 101–113 (VILVDDVLFTGRT).

The protein belongs to the purine/pyrimidine phosphoribosyltransferase family. PyrR subfamily.

It catalyses the reaction UMP + diphosphate = 5-phospho-alpha-D-ribose 1-diphosphate + uracil. Functionally, regulates the transcription of the pyrimidine nucleotide (pyr) operon in response to exogenous pyrimidines. Its function is as follows. Also displays a weak uracil phosphoribosyltransferase activity which is not physiologically significant. The sequence is that of Bifunctional protein PyrR from Desulfosudis oleivorans (strain DSM 6200 / JCM 39069 / Hxd3) (Desulfococcus oleovorans).